Consider the following 880-residue polypeptide: Alanine--tRNA ligase (880 aa).

Zn(2+)-binding residues include His-565, His-569, Cys-675, and His-679.

Belongs to the class-II aminoacyl-tRNA synthetase family. Zn(2+) is required as a cofactor.

Its subcellular location is the cytoplasm. It carries out the reaction tRNA(Ala) + L-alanine + ATP = L-alanyl-tRNA(Ala) + AMP + diphosphate. Functionally, catalyzes the attachment of alanine to tRNA(Ala) in a two-step reaction: alanine is first activated by ATP to form Ala-AMP and then transferred to the acceptor end of tRNA(Ala). Also edits incorrectly charged Ser-tRNA(Ala) and Gly-tRNA(Ala) via its editing domain. This chain is Alanine--tRNA ligase, found in Granulibacter bethesdensis (strain ATCC BAA-1260 / CGDNIH1).